The chain runs to 287 residues: Putative sugar uptake protein EF_0928 (287 aa).

The next 10 helical transmembrane spans lie at 5–27, 32–49, 53–71, 84–106, 116–134, 155–177, 182–200, 207–229, 234–256, and 265–284; these read IALV…GGSA, LGMT…FFVI, LTTA…WSLG, VSVG…GAVF, FVVG…YLTA, IRAL…ATGL, IILP…FAFK, FVWM…LLTM, LAIS…IFLL, and MFYV…LLGY.

Belongs to the GRP transporter (TC 2.A.7.5) family.

The protein localises to the cell membrane. The polypeptide is Putative sugar uptake protein EF_0928 (Enterococcus faecalis (strain ATCC 700802 / V583)).